Consider the following 204-residue polypeptide: Holliday junction branch migration complex subunit RuvA (204 aa).

Residues 1–64 (MIGRLQGILL…EDAHLLFGFS (64 aa)) form a domain I region. The tract at residues 65–143 (AKTDRTLFRE…GIKQPDFFVE (79 aa)) is domain II. The segment at 144-155 (SSHVGAVDPVTT) is flexible linker. The interval 156–204 (SPEVPAEEAVAALMALGYKASDAEKMVKRIAKPHLTSEQLIREALKAAL) is domain III.

Belongs to the RuvA family. In terms of assembly, homotetramer. Forms an RuvA(8)-RuvB(12)-Holliday junction (HJ) complex. HJ DNA is sandwiched between 2 RuvA tetramers; dsDNA enters through RuvA and exits via RuvB. An RuvB hexamer assembles on each DNA strand where it exits the tetramer. Each RuvB hexamer is contacted by two RuvA subunits (via domain III) on 2 adjacent RuvB subunits; this complex drives branch migration. In the full resolvosome a probable DNA-RuvA(4)-RuvB(12)-RuvC(2) complex forms which resolves the HJ.

It localises to the cytoplasm. Functionally, the RuvA-RuvB-RuvC complex processes Holliday junction (HJ) DNA during genetic recombination and DNA repair, while the RuvA-RuvB complex plays an important role in the rescue of blocked DNA replication forks via replication fork reversal (RFR). RuvA specifically binds to HJ cruciform DNA, conferring on it an open structure. The RuvB hexamer acts as an ATP-dependent pump, pulling dsDNA into and through the RuvAB complex. HJ branch migration allows RuvC to scan DNA until it finds its consensus sequence, where it cleaves and resolves the cruciform DNA. In Mannheimia succiniciproducens (strain KCTC 0769BP / MBEL55E), this protein is Holliday junction branch migration complex subunit RuvA.